The chain runs to 116 residues: NADH-ubiquinone oxidoreductase chain 3 (116 aa).

Transmembrane regions (helical) follow at residues 3-23 (LIST…LVSF), 56-76 (FFLI…LLPL), and 87-107 (LTFM…IYEW).

It belongs to the complex I subunit 3 family.

It is found in the mitochondrion membrane. The catalysed reaction is a ubiquinone + NADH + 5 H(+)(in) = a ubiquinol + NAD(+) + 4 H(+)(out). Its function is as follows. Core subunit of the mitochondrial membrane respiratory chain NADH dehydrogenase (Complex I) that is believed to belong to the minimal assembly required for catalysis. Complex I functions in the transfer of electrons from NADH to the respiratory chain. The immediate electron acceptor for the enzyme is believed to be ubiquinone. The chain is NADH-ubiquinone oxidoreductase chain 3 (MT-ND3) from Gadus morhua (Atlantic cod).